The primary structure comprises 514 residues: Extracellular exo-inulinase inuE (514 aa).

The first 18 residues, 1 to 18 (MRAFLALIFLTFVMNVES), serve as a signal peptide directing secretion. Residues 33-34 (ND) and Gln52 each bind substrate. Asp34 acts as the Nucleophile in catalysis. An N-linked (GlcNAc...) asparagine glycan is attached at Asn56. Substrate contacts are provided by Trp60 and Ser95. N-linked (GlcNAc...) asparagine glycans are attached at residues Asn104 and Asn110. 162 to 163 (RD) is a binding site for substrate. Asn197 and Asn203 each carry an N-linked (GlcNAc...) asparagine glycan. Glu214 and Trp300 together coordinate substrate. Catalysis depends on Glu214, which acts as the Proton donor/acceptor. Residues Asn357, Asn371, Asn389, and Asn422 are each glycosylated (N-linked (GlcNAc...) asparagine).

It belongs to the glycosyl hydrolase 32 family.

Its subcellular location is the secreted. It catalyses the reaction Hydrolysis of terminal, non-reducing (2-&gt;1)- and (2-&gt;6)-linked beta-D-fructofuranose residues in fructans.. Functionally, exo-inulinase involved in utilization of the plant storage polymer inulin, consisting of fructooligosaccharides with a degree of polymerization (DP) value from 2 to 60. Splits off terminal fructose units successively from the non-reducing end of the inulin molecule. This is Extracellular exo-inulinase inuE from Meyerozyma guilliermondii (Yeast).